The chain runs to 322 residues: Atrochrysone carboxyl ACP thioesterase dmxR1 (322 aa).

Zn(2+) contacts are provided by H105, H107, D109, and H110. D109 acts as the Proton donor/acceptor in catalysis.

This sequence belongs to the metallo-beta-lactamase superfamily. Zn(2+) is required as a cofactor.

It carries out the reaction atrochrysone carboxyl-[ACP] + H2O = atrochrysone carboxylate + holo-[ACP] + H(+). The protein operates within secondary metabolite biosynthesis. Its function is as follows. Atrochrysone carboxyl ACP thioesterase; part of the gene cluster that mediates the biosynthesis of the dimeric xanthones cryptosporioptides. The pathway begins with the synthesis of atrochrysone thioester by the polyketide synthase dmx-nrPKS. The atrochrysone carboxyl ACP thioesterase dmxR1 then breaks the thioester bond and releases the atrochrysone carboxylic acid from dmx-nrPKS. Atrochrysone carboxylic acid is decarboxylated by the decarboxylase dmxR15, and oxidized by the anthrone oxygenase dmxR16 to yield emodin. Emodin is then reduced to emodin hydroquinone by the oxidoreductase dmxR7. A-ring reduction by the short chain dehydrogenase dmxR18, dehydration by the scytalone dehydratase-like protein dmxR17 and probable spontaneous re-oxidation, results in overall deoxygenation to chrysophanol. Baeyer-Villiger oxidation by the Baeyer-Villiger monooxygenase (BVMO) dmxR6 then yields monodictylactone in equilibrium with monodictyphenone. In the case of the cryptosporioptides biosynthesis, monodictylactone is reduced at C-12 to an alcohol (by the short chain dehydrogenases dmxR12 or dmxR8) and hydroxylated at C-5 by dmxR9, yielding the electron-rich aromatic which could eliminate H(2)O to form the ortho-quinonemethide, followed by tautomerisation to paraquinone and complete the formal reduction to produce the 10-methylgroup. Conjugate addition of C-4a-OH to the resulting paraquinone by the monooxygenase dmxR10 then gives cyclohexadienone, which is then reduced at C-5 by the short chain dehydrogenase dmxR3 to give the dihydroxanthone. The 6,7-epoxide in the cryptosporioptides could be introduced by the cytochrome P450 monooxygenase dmxL3. The highly reducing PKS dmxL2 manufactures butyrate, which is further carboxylated by dmxL1 to form ethylmalonate. It is not yet clear whether the carboxylation occurs while the butyrate is attached to the ACP of dmxL2, but this unusual fungal metabolite could then be esterified to O-5 by the O-acetyltransferase dmxR13. Finally, dimerization performed by dmxR5 gives the observed dimers cryptosporioptides A, B and C as the final products of the pathway. This Cryptosporiopsis sp. (strain 8999) protein is Atrochrysone carboxyl ACP thioesterase dmxR1.